Reading from the N-terminus, the 941-residue chain is RNA-directed RNA polymerase (941 aa).

Positions 875–918 (SARQGGMGLPPPPPPPLGGGGMAGPPPPPFMGLRPESSVPTSVP) are disordered. The segment covering 905–918 (MGLRPESSVPTSVP) has biased composition (low complexity).

Forms a ribonucleoprotein complex with the 23S RNA, where a single polymerase molecule binds to a single viral RNA genome. Since the viral RNA is not encapsidated, ribonucleoprotein complex formation appears to be the strategy to survive in the host as persistent virus.

It is found in the host cytoplasm. The enzyme catalyses RNA(n) + a ribonucleoside 5'-triphosphate = RNA(n+1) + diphosphate. RNA-directed RNA polymerase that replicates the viral (+) and (-) genome. The sequence is that of RNA-directed RNA polymerase from Saccharomyces 23S RNA narnavirus (ScNV-23S).